A 264-amino-acid polypeptide reads, in one-letter code: Thymidylate synthase (264 aa).

A dUMP-binding site is contributed by Arg-21. Position 51 (His-51) interacts with (6R)-5,10-methylene-5,6,7,8-tetrahydrofolate. A dUMP-binding site is contributed by 126-127 (RR). The active-site Nucleophile is the Cys-146. Residues 166–169 (RSCD), Asn-177, and 207–209 (HLY) each bind dUMP. (6R)-5,10-methylene-5,6,7,8-tetrahydrofolate is bound at residue Asp-169. Residue Ala-263 participates in (6R)-5,10-methylene-5,6,7,8-tetrahydrofolate binding.

The protein belongs to the thymidylate synthase family. Bacterial-type ThyA subfamily. As to quaternary structure, homodimer.

The protein resides in the cytoplasm. It catalyses the reaction dUMP + (6R)-5,10-methylene-5,6,7,8-tetrahydrofolate = 7,8-dihydrofolate + dTMP. The protein operates within pyrimidine metabolism; dTTP biosynthesis. Functionally, catalyzes the reductive methylation of 2'-deoxyuridine-5'-monophosphate (dUMP) to 2'-deoxythymidine-5'-monophosphate (dTMP) while utilizing 5,10-methylenetetrahydrofolate (mTHF) as the methyl donor and reductant in the reaction, yielding dihydrofolate (DHF) as a by-product. This enzymatic reaction provides an intracellular de novo source of dTMP, an essential precursor for DNA biosynthesis. The chain is Thymidylate synthase from Shigella dysenteriae serotype 1 (strain Sd197).